Consider the following 365-residue polypeptide: Class E basic helix-loop-helix protein 22 (365 aa).

3 disordered regions span residues 34 to 93 (AFRS…GGGG), 134 to 156 (GRGS…DGRC), and 188 to 225 (HLHG…KEQK). The span at 82 to 93 (GGGGAGGGGGGG) shows a compositional bias: gly residues. Residues 191–216 (GGAGLPPGGSTGSGGGGSGGGGGGGS) show a composition bias toward gly residues. One can recognise a bHLH domain in the interval 226–280 (ALRLNINARERRRMHDLNDALDELRAVIPYAHSPSVRKLSKIATLLLAKNYILMQ).

In terms of assembly, heterodimer with other bHLH proteins, like TCF3/E47. As to expression, kidney, lung, brain and pancreas (insulinoma).

The protein localises to the nucleus. In terms of biological role, inhibits DNA binding of TCF3/E47 homodimers and TCF3 (E47)/NEUROD1 heterodimers and acts as a strong repressor of Neurod1 and Myod-responsive genes, probably by heterodimerization with class a basic helix-loop-helix factors. Despite the presence of an intact basic domain, does not bind to DNA. In Mesocricetus auratus (Golden hamster), this protein is Class E basic helix-loop-helix protein 22 (BHLHE22).